Here is a 622-residue protein sequence, read N- to C-terminus: MKKNMFIAVVLSVLVLVGASFLQELLYPSASSSHSAAEHTLSAVPEETRTQSAHGGAADTQETTQPAAHPSGQVLVFPESETEERVERTYVVRTPLVQVTFTNRGGDILSYQLREHYAAQRREYVEMVEQARPDHRAFSLALGDEYAPNVNALFQVKQEIGARGVHSIGFYRSVATQHADGTRTPFVLAKRYVFYPDNYMFELHVSLSADVLEEREDSRQGAKVRAVAETNAGPATTVLARANGFDFGTASYTLRTPPEIGPERNAADKYEFRTFMVGAGGKAKTYALKGDGREQVDTPVSWASVSGKYFALIVLPNDADSLKRLVLSAPQAETAVQHHIAFVRRAVAQPAVADVYRVYIGPCAEQYLSAYNVASRNPYGLERTYIDAVAVSGGILYPLEVLLKWLLRLFYTLIPNWGVAIILVTIAIKVLFFPLTKRSFIAMQKMQELQPHMQRIQERYKGNTQKIHEEMAKLYREAQYNPLSGCLPTLVQMPIIFAMYRLFNNYFEFRGAMFIPYWIPDLSLADSVWTLPFALPVTQWTQMRMLPVLYVVSQIMFSKLTQVPHTEQQKTSMTIMTYVMPLFFFFFFYDAPSGLLVYWTAMNGVTLVQQLVMKRTANKNKT.

A helical membrane pass occupies residues 6–26 (FIAVVLSVLVLVGASFLQELL). Positions 37-71 (AEHTLSAVPEETRTQSAHGGAADTQETTQPAAHPS) are disordered. Transmembrane regions (helical) follow at residues 413–433 (LIPN…VLFF), 483–503 (LSGC…YRLF), 513–533 (MFIP…TLPF), and 579–599 (VMPL…LVYW).

This sequence belongs to the OXA1/ALB3/YidC family. Type 1 subfamily. As to quaternary structure, interacts with the Sec translocase complex via SecD. Specifically interacts with transmembrane segments of nascent integral membrane proteins during membrane integration.

It localises to the cell inner membrane. Required for the insertion and/or proper folding and/or complex formation of integral membrane proteins into the membrane. Involved in integration of membrane proteins that insert both dependently and independently of the Sec translocase complex, as well as at least some lipoproteins. Aids folding of multispanning membrane proteins. This chain is Membrane protein insertase YidC, found in Treponema pallidum (strain Nichols).